The following is a 250-amino-acid chain: Ubiquinone/menaquinone biosynthesis C-methyltransferase UbiE (250 aa).

S-adenosyl-L-methionine contacts are provided by residues Thr-73, Asp-94, and 122–123; that span reads DA.

The protein belongs to the class I-like SAM-binding methyltransferase superfamily. MenG/UbiE family.

It catalyses the reaction a 2-demethylmenaquinol + S-adenosyl-L-methionine = a menaquinol + S-adenosyl-L-homocysteine + H(+). The enzyme catalyses a 2-methoxy-6-(all-trans-polyprenyl)benzene-1,4-diol + S-adenosyl-L-methionine = a 5-methoxy-2-methyl-3-(all-trans-polyprenyl)benzene-1,4-diol + S-adenosyl-L-homocysteine + H(+). It participates in quinol/quinone metabolism; menaquinone biosynthesis; menaquinol from 1,4-dihydroxy-2-naphthoate: step 2/2. Its pathway is cofactor biosynthesis; ubiquinone biosynthesis. Functionally, methyltransferase required for the conversion of demethylmenaquinol (DMKH2) to menaquinol (MKH2) and the conversion of 2-polyprenyl-6-methoxy-1,4-benzoquinol (DDMQH2) to 2-polyprenyl-3-methyl-6-methoxy-1,4-benzoquinol (DMQH2). This Coxiella burnetii (strain RSA 331 / Henzerling II) protein is Ubiquinone/menaquinone biosynthesis C-methyltransferase UbiE.